We begin with the raw amino-acid sequence, 616 residues long: Chaperone protein HscA (616 aa).

It belongs to the heat shock protein 70 family.

Its function is as follows. Chaperone involved in the maturation of iron-sulfur cluster-containing proteins. Has a low intrinsic ATPase activity which is markedly stimulated by HscB. Involved in the maturation of IscU. This Edwardsiella ictaluri (strain 93-146) protein is Chaperone protein HscA.